The sequence spans 119 residues: HTH-type transcriptional regulator SarX (119 aa).

Positions 55–78 form a DNA-binding region, H-T-H motif; the sequence is LKTAMDELDLSRTKLLVSIRRLIE.

The protein belongs to the SarA family.

It localises to the cytoplasm. Involved in the regulation of virulence genes. Acts as a repressor of the agr locus and consequently targets genes regulated by the agr system such as sspA, hla and hlb. Binds directly to the agr promoter region. The polypeptide is HTH-type transcriptional regulator SarX (sarX) (Staphylococcus aureus (strain bovine RF122 / ET3-1)).